The following is a 367-amino-acid chain: MEVRVQNIRKEFGRFPALEDVSLDIRSGELIALLGPSGSGKTTLLRLVAGLESPTEGTIFFGDEDASKKTVQQRNIGFVFQHYALFRHMTVLDNVAFGLKVRPAKRRPSAADIRRRAVDLLELVQLSGLERRYPAQLSGGQRQRVALARAMAVEPNVLLLDEPFGALDAQVRKELRRWLREIHDRTGHTTIFVTHDQEEALELADRVVVMSKGAIEQVGTPDEIYDHPVSPFVYGFIGQSNCLDVTLANGEIWHEDRPIGLRAGNEPDGAATLYFRPHDVELIDGCGGCLAGLVTASRRVAGTRHLELDLGRKHPPVEIELPPERAASTDHTRIAFRPTRWKLFRKGGQKEAPLIEAEAPVLAATGT.

Residues 3-237 (VRVQNIRKEF…PVSPFVYGFI (235 aa)) enclose the ABC transporter domain. 35–42 (GPSGSGKT) contributes to the ATP binding site.

The protein belongs to the ABC transporter superfamily. Sulfate/tungstate importer (TC 3.A.1.6) family. As to quaternary structure, the complex is composed of two ATP-binding proteins (CysA), two transmembrane proteins (CysT and CysW) and a solute-binding protein (CysP).

The protein resides in the cell inner membrane. The enzyme catalyses sulfate(out) + ATP + H2O = sulfate(in) + ADP + phosphate + H(+). It catalyses the reaction thiosulfate(out) + ATP + H2O = thiosulfate(in) + ADP + phosphate + H(+). Functionally, part of the ABC transporter complex CysAWTP involved in sulfate/thiosulfate import. Responsible for energy coupling to the transport system. The protein is Sulfate/thiosulfate import ATP-binding protein CysA 2 of Rhizobium meliloti (strain 1021) (Ensifer meliloti).